A 241-amino-acid polypeptide reads, in one-letter code: Uridylate kinase (241 aa).

Residue 15–18 (KLSG) coordinates ATP. Residues 23-28 (GTEGFG) are involved in allosteric activation by GTP. G57 contributes to the UMP binding site. Residues G58 and R62 each coordinate ATP. Residues D77 and 138–145 (TGNPFFTT) contribute to the UMP site. T165, F171, and D174 together coordinate ATP.

This sequence belongs to the UMP kinase family. In terms of assembly, homohexamer.

The protein resides in the cytoplasm. It catalyses the reaction UMP + ATP = UDP + ADP. It functions in the pathway pyrimidine metabolism; CTP biosynthesis via de novo pathway; UDP from UMP (UMPK route): step 1/1. Allosterically activated by GTP. Inhibited by UTP. Catalyzes the reversible phosphorylation of UMP to UDP. This Escherichia coli O139:H28 (strain E24377A / ETEC) protein is Uridylate kinase.